The primary structure comprises 428 residues: Trigger factor (428 aa).

Residues 166-250 (GDIVTFDFKG…IKNIKEKILP (85 aa)) form the PPIase FKBP-type domain.

It belongs to the FKBP-type PPIase family. Tig subfamily.

The protein resides in the cytoplasm. The catalysed reaction is [protein]-peptidylproline (omega=180) = [protein]-peptidylproline (omega=0). Involved in protein export. Acts as a chaperone by maintaining the newly synthesized protein in an open conformation. Functions as a peptidyl-prolyl cis-trans isomerase. The protein is Trigger factor of Mycoplasma mycoides subsp. mycoides SC (strain CCUG 32753 / NCTC 10114 / PG1).